Here is a 176-residue protein sequence, read N- to C-terminus: UPF0262 protein GbCGDNIH1_1393 (176 aa).

This sequence belongs to the UPF0262 family.

In Granulibacter bethesdensis (strain ATCC BAA-1260 / CGDNIH1), this protein is UPF0262 protein GbCGDNIH1_1393.